The chain runs to 400 residues: Phosphoglycerate kinase (400 aa).

Residues 23–25, R38, 61–64, R120, and R153 each bind substrate; these read DLN and HFGR. ATP contacts are provided by residues K203, E325, and 355 to 358; that span reads GGDT.

The protein belongs to the phosphoglycerate kinase family. Monomer.

The protein localises to the cytoplasm. It carries out the reaction (2R)-3-phosphoglycerate + ATP = (2R)-3-phospho-glyceroyl phosphate + ADP. It functions in the pathway carbohydrate degradation; glycolysis; pyruvate from D-glyceraldehyde 3-phosphate: step 2/5. The protein is Phosphoglycerate kinase of Methylorubrum extorquens (strain CM4 / NCIMB 13688) (Methylobacterium extorquens).